The chain runs to 216 residues: Adenylate kinase (216 aa).

An ATP-binding site is contributed by 10–15; it reads GAGKGT. The tract at residues 30 to 59 is NMP; that stretch reads STGDIFRAAIKNQTPMGVEAKKFIDKGELV. AMP contacts are provided by residues T31, R36, 57-59, 85-88, and Q92; these read ELV and GFPR. The LID stretch occupies residues 126–164; that stretch reads GRFICRNCGTTYHRLYNPTKVEGTCDVCGGHDFYQRDDD. R127 contributes to the ATP binding site. Zn(2+) contacts are provided by C130 and C133. Position 136 to 137 (136 to 137) interacts with ATP; the sequence is TY. Residues C150 and C153 each coordinate Zn(2+). AMP contacts are provided by R161 and R172. Q200 is a binding site for ATP.

Belongs to the adenylate kinase family. In terms of assembly, monomer.

It localises to the cytoplasm. The enzyme catalyses AMP + ATP = 2 ADP. Its pathway is purine metabolism; AMP biosynthesis via salvage pathway; AMP from ADP: step 1/1. Functionally, catalyzes the reversible transfer of the terminal phosphate group between ATP and AMP. Plays an important role in cellular energy homeostasis and in adenine nucleotide metabolism. The protein is Adenylate kinase of Limosilactobacillus fermentum (strain NBRC 3956 / LMG 18251) (Lactobacillus fermentum).